The following is a 634-amino-acid chain: MINIRFPDGSIREFEAGVNSLDVAKSISPSLAKATMAAYIDDQLKDAKDAINSNCELRLITVKDPEGLEILRHSCAHLLAHAVKELYPNTEVTIGPVVDNGFYYDFSFKESIGEADLPTIEKKMKELAKKSAPVSYRVVPKAEAIEFFKAQGENYKVEIIDSIADEQMKIYTQDNFSDLCRGPHIPNTSVLKAFKLTKLAGAYWRGNSDNEMLTRIYGTCWATKEDLEQYLNMLEEAEKRDHRKIGKVLDLFHFQEDSPGIAFWHDNGVRIWRQVEDYMRASNNKYGCSEIRTPLIADFSLWQKSGHASKYAENMFATKSENRDFAIRPMNCPTCVQVYNTKLHSYRDLPIRMAEFGIVHRNEPSGSLHGLLRVRSFTQDDGHIFCTPEQVEEEVILMVQQCFEVYKDFGFNDFAVKIALRPENRIGDDETWDKSEQILKNALDANNVSYELFPGEGAFYGPKIEFHLKDAIGRSWQCGTIQLDFSMPQRLGATYIDKNGEKQVSVMLHRAIVGSLERFIGMLIEHYAGNLPLWLAPVQVAVMGISNNQDDYCKEVFIMLEKNGIRAKLDLRNEKIGFKIREHTLLRVPYLVILGKNEQEQKIITIRKHSGEDLGQMSVDDFCAFLDKQIQAKE.

The TGS domain occupies 1 to 61 (MINIRFPDGS…NSNCELRLIT (61 aa)). A catalytic region spans residues 241–532 (DHRKIGKVLD…LIEHYAGNLP (292 aa)). Cys332, His383, and His509 together coordinate Zn(2+).

This sequence belongs to the class-II aminoacyl-tRNA synthetase family. In terms of assembly, homodimer. Zn(2+) serves as cofactor.

It is found in the cytoplasm. It carries out the reaction tRNA(Thr) + L-threonine + ATP = L-threonyl-tRNA(Thr) + AMP + diphosphate + H(+). Catalyzes the attachment of threonine to tRNA(Thr) in a two-step reaction: L-threonine is first activated by ATP to form Thr-AMP and then transferred to the acceptor end of tRNA(Thr). Also edits incorrectly charged L-seryl-tRNA(Thr). This chain is Threonine--tRNA ligase, found in Francisella tularensis subsp. holarctica (strain FTNF002-00 / FTA).